Here is an 81-residue protein sequence, read N- to C-terminus: Insulin-like growth factor 1 (81 aa).

The propeptide occupies 1–4 (FASA). Residues 5 to 33 (GPETLCGAELVDALQFVCGDRGFYFNKPT) form a b region. Disulfide bonds link Cys10/Cys52, Cys22/Cys65, and Cys51/Cys56. A c region spans residues 34-45 (GYGSSSRRAPQT). The interval 46–66 (GIVDECCFRSCDLRRLEMYCA) is a. Positions 67–74 (PLKPAKAA) are d. Residues 75 to 81 (RSVRAQR) constitute a propeptide, e peptide.

This sequence belongs to the insulin family. In terms of assembly, forms a ternary complex with IGFR1 and ITGAV:ITGB3. Forms a ternary complex with IGFR1 and ITGA6:ITGB4.

Its subcellular location is the secreted. In terms of biological role, the insulin-like growth factors, isolated from plasma, are structurally and functionally related to insulin but have a much higher growth-promoting activity. May be a physiological regulator of [1-14C]-2-deoxy-D-glucose (2DG) transport and glycogen synthesis in osteoblasts. Stimulates glucose transport in bone-derived osteoblastic (PyMS) cells and is effective at much lower concentrations than insulin, not only regarding glycogen and DNA synthesis but also with regard to enhancing glucose uptake. May play a role in synapse maturation. Ca(2+)-dependent exocytosis of IGF1 is required for sensory perception of smell in the olfactory bulb. Acts as a ligand for IGF1R. Binds to the alpha subunit of IGF1R, leading to the activation of the intrinsic tyrosine kinase activity which autophosphorylates tyrosine residues in the beta subunit thus initiating a cascade of down-stream signaling events leading to activation of the PI3K-AKT/PKB and the Ras-MAPK pathways. Binds to integrins ITGAV:ITGB3 and ITGA6:ITGB4. Its binding to integrins and subsequent ternary complex formation with integrins and IGFR1 are essential for IGF1 signaling. Induces the phosphorylation and activation of IGFR1, MAPK3/ERK1, MAPK1/ERK2 and AKT1. As part of the MAPK/ERK signaling pathway, acts as a negative regulator of apoptosis in cardiomyocytes via promotion of STUB1/CHIP-mediated ubiquitination and degradation of ICER-type isoforms of CREM. The protein is Insulin-like growth factor 1 of Suncus murinus (Asian house shrew).